We begin with the raw amino-acid sequence, 61 residues long: Large ribosomal subunit protein eL24 (61 aa).

C7, C10, C33, and C37 together coordinate Zn(2+). The C4-type zinc-finger motif lies at 7 to 37; the sequence is CSFCGHEIPPGTGLMYVRNDGTMLWFCSSKC.

It belongs to the eukaryotic ribosomal protein eL24 family. In terms of assembly, part of the 50S ribosomal subunit. Forms a cluster with proteins L3 and L14. Zn(2+) is required as a cofactor.

In terms of biological role, binds to the 23S rRNA. In Saccharolobus islandicus (strain M.16.27) (Sulfolobus islandicus), this protein is Large ribosomal subunit protein eL24.